The sequence spans 457 residues: Aromatic amino acid transport protein AroP (457 aa).

Residues 1 to 18 lie on the Cytoplasmic side of the membrane; that stretch reads MMEGQQHGEQLKRGLKNR. A helical membrane pass occupies residues 19 to 39; that stretch reads HIQLIALGGAIGTGLFLGSAS. Over 40-42 the chain is Periplasmic; sequence VIQ. Residues 43-63 traverse the membrane as a helical segment; the sequence is SAGPGIILGYAIAGFIAFLIM. Residues 64-98 are Cytoplasmic-facing; the sequence is RQLGEMVVEEPVAGSFSHFAYKYWGSFAGFASGWN. The helical transmembrane segment at 99–119 threads the bilayer; it reads YWVLYVLVAMAELTAVGKYIQ. The Periplasmic portion of the chain corresponds to 120-124; the sequence is FWYPE. The chain crosses the membrane as a helical span at residues 125-145; the sequence is IPTWVSAAVFFVVINAINLTN. At 146-147 the chain is on the cytoplasmic side; the sequence is VK. Residues 148 to 168 form a helical membrane-spanning segment; that stretch reads VFGEMEFWFAIIKVIAVVAMI. At 169–192 the chain is on the periplasmic side; it reads IFGGWLLFSGNGGPQATVSNLWDQ. Residues 193–213 traverse the membrane as a helical segment; that stretch reads GGFLPHGFTGLVMMMAIIMFS. Residues 214 to 239 are Cytoplasmic-facing; it reads FGGLELVGITAAEADNPEQSIPKATN. Residues 240–260 traverse the membrane as a helical segment; sequence QVIYRILIFYIGSLAVLLSLM. The Periplasmic portion of the chain corresponds to 261-279; that stretch reads PWTRVTADTSPFVLIFHEL. The chain crosses the membrane as a helical span at residues 280–300; sequence GDTFVANALNIVVLTAALSVY. Over 301–330 the chain is Cytoplasmic; the sequence is NSCVYCNSRMLFGLAQQGNAPKALASVDKR. Residues 331–351 traverse the membrane as a helical segment; the sequence is GVPVNTILVSALVTALCVLIN. The Periplasmic segment spans residues 352–359; sequence YLAPESAF. A helical membrane pass occupies residues 360-380; that stretch reads GLLMALVVSALVINWAMISLA. Over 381 to 402 the chain is Cytoplasmic; sequence HMKFRRAKQEQGVVTRFPALLY. A helical membrane pass occupies residues 403–423; that stretch reads PLGNWICLLFMAAVLVIMLMT. Residues 424 to 426 are Periplasmic-facing; sequence PGM. Residues 427–447 form a helical membrane-spanning segment; the sequence is AISVYLIPVWLIVLGIGYLFK. At 448–457 the chain is on the cytoplasmic side; sequence EKTAKAVKAH.

It belongs to the amino acid-polyamine-organocation (APC) superfamily. Amino acid transporter (AAT) (TC 2.A.3.1) family.

It localises to the cell inner membrane. It catalyses the reaction L-phenylalanine(in) + H(+)(in) = L-phenylalanine(out) + H(+)(out). It carries out the reaction L-tryptophan(in) + H(+)(in) = L-tryptophan(out) + H(+)(out). The enzyme catalyses L-tyrosine(in) + H(+)(in) = L-tyrosine(out) + H(+)(out). With respect to regulation, strong, mutual inhibition of uptake by tyrosine, phenylalanine, and tryptophan. Transport is also inhibited by the aromatic analogs p-fluorophenylalanine, beta-2-thienylalanine and 5-methyltryptophan. Permease that is involved in the active transport across the cytoplasmic membrane of all three aromatic amino acids, phenylalanine, tyrosine and tryptophan. The sequence is that of Aromatic amino acid transport protein AroP from Escherichia coli (strain K12).